The sequence spans 1761 residues: MSRHQAVLQLHFFASILETLLKDVNHPLSHFDKVSEDELDELWSWNTPLQPELRFCMHEKVSERAALHPEKIAIDAWDGTLTYGQIEDYSDKLAKLLRLLDDSSNRIIPVLFEKSRWTSVAVLAIMKSGACFALLDPAQPEGRLRAVVQQVNAKIFLSSKAQSTLAARVAPAATIIPISKSKFNKIFSPYTAEQPNTTLPPVSPDQPLYIQFTSGSTGVPKGCILTHSQYTSGAIPRAAAVGYYPHSRVLDFASYAFDVCIDSMLCTLAHGATLCTPSDERRMNDMSGAMRDMRVTFAGMTPSVARTLDVDILNNLESIALGGEGVSISDAMSWGQRTRVVNAYGPSEATVGATINDNVAAKPYITMGQRKGCALWLTEPEDHNKLVPVGAVGELLIEGPIVGNGYLNNPSKTKEVFIEDPEFLIKGSKSYPGRHGRIYKTGDLVRFDPDGDGEPIFVGRQDQQVKLRGQRIELAEIEFNMQKHLPPDTQLAAEVIKPSGGGEQTLVAFLVEQKKNGMRHLDGNVFGSFTNKFQSALRDMTKQLFVDLPSYMVPSAYIPLWKMPLLVSCKTDRKRLREIGASVTRQDLRRFNSAVSEKKEATTEMELKLQSLWAKVLGGDADFSANDNFFSMGGDSLRAMRLVAAARDEAIVLSVPDIMLNPTLSAMAEKAKPVSAEETNEVPPFSMIGKDWDADAARRESARLCGVDAANVEDVYPCTPLQEGLIALSAKFQDAYVAQRVATLPAKTALRLKEAFDTAVEGSPVLRTRIVNVTGRGLFQVVLKDGQLVREHGTDTSEYLRRDRNEPMDLGTALFRYGLVKEPESDQMNFVITMHHAVYDGWSMPLVFDHVNSAFNGLHTERPTSFKHFIKHLTSLDPADAQQYWKKRLEGTSPHQFPPLPQKGYTTQADSLLEHYVTVPTSAHSKLTLATIIRGAWALVSSLYIGHPDIVFGETLTGRSAPVPGIEQIEGPMITTVPIRVRLSLDRPITEYLQMIHAVTVKQIPHEHLGLQNIRRLSKDARVACDLRTGLVLHPKEDEDWGKVSLETPANTFLPASDEEGAREALKFNTYALMLVCTLEENGFLVMASFDSNCISKEAMERVLVVLDRIVHAFLGNPESKLGDVAVLDPAEARDAEAMRPRDVMSDSALGMSPVDGLESMDASLKELSPNEEKLRNILGRILGMKETDIRPSDSFFDLGGDSIGAMRLVSDARAQGLNLTVAQVFQSRSLSDLAASASNEREDKLAEILSRILGIAKSDIKSSDSFFELGGDSIGAMRLVSDARAQGLSITVAQVFQSKSLAELASSAEEEMPSQPKTNVDAPFIALGKDANLHSPDRVGVYLENQEWEITNIYPTRPLQQLAVEGTVDLPRYSLRYELIKFATPIDRQKLEQACQELVARNEVLRTVFVKDNELTLGVVLSALRVPYTETAVPEGEDADAFIQAGIKQDIEAPKPYGSSFVAFNLFTHPNGASTLVFRISHAQYDEICLPILFEQLSALYSGTTVPETVPFSKHVNHVVLDNIPKAIPYWENLLSGSEMTVLKPTIPLTHRGPADIYREFDISSRPANITIGSLPTAAWALVLSRRLNLTDVVFGEVVSGRNVGAPNADRIFGPTWQYIPFRVPFSKSWSYLDLLRYVQDQHMTSAAYESMGFSEIVKNCTNWDEDKVQWFDTVVHQAPAWVEELPFGNGVEAKFQTLYPHGEPLREWKCQAFVKEGGRKLGIEIVTFEEWIGEAEGVLEEVGKALECLMEGRVGESIF.

Positions 63-468 (ERAALHPEKI…GRQDQQVKLR (406 aa)) are adenylation. Residues 600-675 (EATTEMELKL…AMAEKAKPVS (76 aa)) form the Carrier 1 domain. Residue Ser636 is modified to O-(pantetheine 4'-phosphoryl)serine. A condensation 1 region spans residues 712-1135 (VEDVYPCTPL…AVLDPAEARD (424 aa)). 2 consecutive Carrier domains span residues 1169–1242 (SPNE…SNER) and 1237–1313 (SASN…EEEM). An O-(pantetheine 4'-phosphoryl)serine mark is found at Ser1203 and Ser1274. The tract at residues 1354–1677 (IYPTRPLQQL…DKVQWFDTVV (324 aa)) is condensation 2.

This sequence belongs to the NRP synthetase family.

It functions in the pathway siderophore biosynthesis. Functionally, NRPS involved in extracellular coprogen-type siderophores biosynthesis including coprogen, neocoprogen I and neocoprogen II. The role of extracellular siderophores in fungal virulence to plants is to supply iron to the fungus during plant infection, but not to act as phytotoxins, depriving their hosts of iron. The protein is Nonribosomal peptide synthetase 6 of Cochliobolus miyabeanus (Brown spot disease fungus).